The chain runs to 308 residues: Microtubule integrity protein mal3 (308 aa).

Residues 2–103 (SESRQELLAW…FVQWAKRFWD (102 aa)) form the Calponin-homology (CH) domain. A disordered region spans residues 117–162 (RGNRGPANTRVMNSSAGATGPSRRRQVSSGSSTPSMTKSSANNNNV). A compositionally biased stretch (low complexity) spans 144-162 (SSGSSTPSMTKSSANNNNV). The EB1 C-terminal domain maps to 173–247 (RAKQAQQQIT…LYSTEDGFEL (75 aa)).

The protein belongs to the MAPRE family. Interacts with tea2.

It is found in the cytoplasm. It localises to the cytoskeleton. May play a role in regulating the integrity of microtubules possibly by influencing their stability. Involved in an anchoring mechanism to maintain tea2 and tip1 at growing microtubule ends. Strongly stimulates the ATPase activity of tea2. The sequence is that of Microtubule integrity protein mal3 (mal3) from Schizosaccharomyces pombe (strain 972 / ATCC 24843) (Fission yeast).